The primary structure comprises 483 residues: Cysteine--tRNA ligase (483 aa).

A Zn(2+)-binding site is contributed by Cys-28. Residues 30–40 carry the 'HIGH' region motif; that stretch reads MTVYDYCHLGH. Residues Cys-212, His-237, and Glu-241 each coordinate Zn(2+). Positions 269–273 match the 'KMSKS' region motif; it reads KMSKS. Position 272 (Lys-272) interacts with ATP.

Belongs to the class-I aminoacyl-tRNA synthetase family. Monomer. The cofactor is Zn(2+).

It is found in the cytoplasm. The enzyme catalyses tRNA(Cys) + L-cysteine + ATP = L-cysteinyl-tRNA(Cys) + AMP + diphosphate. This chain is Cysteine--tRNA ligase, found in Bordetella avium (strain 197N).